A 290-amino-acid chain; its full sequence is Syntaxin (290 aa).

Residues 1-22 form a disordered region; it reads MTKDRLAALKAAQSDDDDNDDV. Residues 1-267 lie on the Cytoplasmic side of the membrane; that stretch reads MTKDRLAALK…KYQSKARRKK (267 aa). A coiled-coil region spans residues 32 to 114; that stretch reads MEEFFEQVDE…EEHTNKSSAD (83 aa). Residues 194–256 enclose the t-SNARE coiled-coil homology domain; that stretch reads LADIEARHND…ETAKMDTKKA (63 aa). A helical; Anchor for type IV membrane protein transmembrane segment spans residues 268 to 288; it reads IMILVCLAILIIILVGVIGGT. The Extracellular segment spans residues 289–290; that stretch reads LG.

It belongs to the syntaxin family.

It is found in the membrane. Functionally, potentially involved in docking of synaptic vesicles at presynaptic active zones. This Aplysia californica (California sea hare) protein is Syntaxin.